The sequence spans 423 residues: Transmembrane protein 130 (423 aa).

An N-terminal signal peptide occupies residues 1–24 (MAQAVWSRLGRILWLSCLLPWAPA). Residues 25-339 (GVAAGLYELN…IQVWPSRIQP (315 aa)) lie on the Extracellular side of the membrane. N-linked (GlcNAc...) asparagine glycans are attached at residues Asn-34, Asn-197, and Asn-300. In terms of domain architecture, PKD spans 147 to 233 (WPSSYLTKTI…AVMQKTGDFS (87 aa)). The chain crosses the membrane as a helical span at residues 340-360 (AVFAFPCATLITVMLAFIMYM). Residues 361–423 (TLRNATQQKD…LYKSVKTYTV (63 aa)) lie on the Cytoplasmic side of the membrane.

The protein localises to the golgi apparatus membrane. The polypeptide is Transmembrane protein 130 (TMEM130) (Pongo abelii (Sumatran orangutan)).